The primary structure comprises 246 residues: Isoprenyl transferase 1 (246 aa).

Asp19 is an active-site residue. Asp19 contacts Mg(2+). Substrate contacts are provided by residues 20 to 23, Trp24, Arg32, His36, and 64 to 66; these read GNGR and STD. The active-site Proton acceptor is Asn67. Substrate-binding positions include Trp68, Arg70, Arg180, and 186-188; that span reads RLS. A Mg(2+)-binding site is contributed by Glu199.

It belongs to the UPP synthase family. Homodimer. Mg(2+) serves as cofactor.

In terms of biological role, catalyzes the condensation of isopentenyl diphosphate (IPP) with allylic pyrophosphates generating different type of terpenoids. The polypeptide is Isoprenyl transferase 1 (Bradyrhizobium diazoefficiens (strain JCM 10833 / BCRC 13528 / IAM 13628 / NBRC 14792 / USDA 110)).